Consider the following 479-residue polypeptide: Zinc metalloproteinase/disintegrin PMMP-1 (479 aa).

Residues 1 to 20 form the signal peptide; it reads MIQVLLVTICLAVFPYQGSS. Positions 21–188 are excised as a propeptide; sequence IILESGNVND…PIKKASKLVV (168 aa). A Peptidase M12B domain is found at 194 to 390; that stretch reads RYVELVIVAD…HNPQCILNKP (197 aa). 3 disulfides stabilise this stretch: cysteine 305–cysteine 385, cysteine 345–cysteine 369, and cysteine 347–cysteine 352. Residue histidine 330 participates in Zn(2+) binding. Glutamate 331 is a catalytic residue. Histidine 334 and histidine 339 together coordinate Zn(2+). N-linked (GlcNAc...) asparagine glycosylation occurs at asparagine 368. Positions 391-408 are excised as a propeptide; it reads LRTDTVSTPVSGNELLEA. The Disintegrin domain maps to 398 to 479; the sequence is TPVSGNELLE…ADCPRNGLYG (82 aa). Intrachain disulfides connect cysteine 412-cysteine 427, cysteine 414-cysteine 422, cysteine 421-cysteine 444, cysteine 435-cysteine 441, cysteine 440-cysteine 465, and cysteine 453-cysteine 472. Positions 457–459 match the Cell attachment site motif; sequence RGD.

It belongs to the venom metalloproteinase (M12B) family. P-II subfamily. P-IIa sub-subfamily. Monomer. Zn(2+) serves as cofactor. As to expression, expressed by the venom gland.

It localises to the secreted. In terms of biological role, impairs hemostasis in the envenomed animal. Functionally, inhibits platelet aggregation. This chain is Zinc metalloproteinase/disintegrin PMMP-1, found in Protobothrops mucrosquamatus (Taiwan habu).